Here is a 505-residue protein sequence, read N- to C-terminus: Catalase (505 aa).

Residues 1–25 form a disordered region; that stretch reads MSRQDKKLTGVFGHPVSDRENSMTA. Catalysis depends on residues His56 and Asn129. Tyr339 provides a ligand contact to heme.

Belongs to the catalase family. In terms of assembly, homodimer. The cofactor is heme.

It carries out the reaction 2 H2O2 = O2 + 2 H2O. Its function is as follows. Decomposes hydrogen peroxide into water and oxygen; serves to protect cells from the toxic effects of hydrogen peroxide. The chain is Catalase (katA) from Staphylococcus aureus (strain MRSA252).